Reading from the N-terminus, the 444-residue chain is Enolase 1 (444 aa).

Substrate is bound by residues His165 and Glu174. Glu217 acts as the Proton donor in catalysis. Substrate-binding residues include Glu303 and Asp330. The active-site Proton acceptor is the Lys355. Substrate contacts are provided by residues 382–385 and Lys406; that span reads SHRS.

Belongs to the enolase family. In terms of assembly, homodimer. Mg(2+) serves as cofactor.

The protein resides in the cytoplasm. It catalyses the reaction (2R)-2-phosphoglycerate = phosphoenolpyruvate + H2O. Its pathway is carbohydrate degradation; glycolysis; pyruvate from D-glyceraldehyde 3-phosphate: step 4/5. The sequence is that of Enolase 1 (ENO1) from Toxoplasma gondii.